Consider the following 890-residue polypeptide: Protein FAM171A1 (890 aa).

An N-terminal signal peptide occupies residues 1–21; the sequence is MSRSATLLLCLLGCHVWKAVT. The Extracellular portion of the chain corresponds to 22 to 303; it reads KTLREPGAGA…VTQDITTYHT (282 aa). 3 N-linked (GlcNAc...) asparagine glycosylation sites follow: Asn159, Asn190, and Asn194. Residues 304-324 form a helical membrane-spanning segment; the sequence is VFLLAILGGMAFILLVLLCLL. The Cytoplasmic portion of the chain corresponds to 325–890; that stretch reads LYYCRRKCLK…ERPLMAFNIK (566 aa). Residues Ser358, Ser360, Ser371, Ser422, Ser443, and Ser525 each carry the phosphoserine modification. Disordered stretches follow at residues 730 to 759 and 818 to 890; these read AGRNGSNDASLDSGVDMNEPKSARKGRGDA and EGSS…FNIK. Residues 747–757 are compositionally biased toward basic and acidic residues; sequence NEPKSARKGRG. The segment covering 822–833 has biased composition (polar residues); it reads RRSGGQLPSLQE. A phosphoserine mark is found at Ser849 and Ser855. Positions 858–869 are enriched in acidic residues; the sequence is EEEEDDDDDDQG. A compositionally biased stretch (basic and acidic residues) spans 870–883; that stretch reads EDKKSPWQKREERP.

This sequence belongs to the FAM171 family. As to quaternary structure, interacts with ADAM10, NSG1 and OAZ1. As to expression, expressed in heart, brain, liver, skeletal muscle, kidney and pancreas. In brain, expressed by glia, pyramidal neurons and astrocytes (at protein level). Highly expressed in placental trophoblasts.

Its subcellular location is the cell membrane. In terms of biological role, involved in the regulation of the cytoskeletal dynamics, plays a role in actin stress fiber formation. This is Protein FAM171A1 from Homo sapiens (Human).